Reading from the N-terminus, the 264-residue chain is Thymidylate synthase (264 aa).

R21 contacts dUMP. H51 is a (6R)-5,10-methylene-5,6,7,8-tetrahydrofolate binding site. Residue R126 to R127 coordinates dUMP. The Nucleophile role is filled by C146. Residues R166–D169, N177, and H207–Y209 each bind dUMP. D169 contacts (6R)-5,10-methylene-5,6,7,8-tetrahydrofolate. A (6R)-5,10-methylene-5,6,7,8-tetrahydrofolate-binding site is contributed by A263.

It belongs to the thymidylate synthase family. Bacterial-type ThyA subfamily. As to quaternary structure, homodimer.

Its subcellular location is the cytoplasm. The enzyme catalyses dUMP + (6R)-5,10-methylene-5,6,7,8-tetrahydrofolate = 7,8-dihydrofolate + dTMP. Its pathway is pyrimidine metabolism; dTTP biosynthesis. Catalyzes the reductive methylation of 2'-deoxyuridine-5'-monophosphate (dUMP) to 2'-deoxythymidine-5'-monophosphate (dTMP) while utilizing 5,10-methylenetetrahydrofolate (mTHF) as the methyl donor and reductant in the reaction, yielding dihydrofolate (DHF) as a by-product. This enzymatic reaction provides an intracellular de novo source of dTMP, an essential precursor for DNA biosynthesis. In Cronobacter sakazakii (strain ATCC BAA-894) (Enterobacter sakazakii), this protein is Thymidylate synthase.